The sequence spans 158 residues: Ribonuclease H (158 aa).

Positions 1–147 (MKVTIYTDGA…CDVLATTAAD (147 aa)) constitute an RNase H type-1 domain. 4 residues coordinate Mg(2+): Asp8, Glu52, Asp74, and Asp139.

The protein belongs to the RNase H family. In terms of assembly, monomer. The cofactor is Mg(2+).

Its subcellular location is the cytoplasm. It carries out the reaction Endonucleolytic cleavage to 5'-phosphomonoester.. Endonuclease that specifically degrades the RNA of RNA-DNA hybrids. The polypeptide is Ribonuclease H (Lachnoclostridium phytofermentans (strain ATCC 700394 / DSM 18823 / ISDg) (Clostridium phytofermentans)).